We begin with the raw amino-acid sequence, 99 residues long: Integration host factor subunit alpha (99 aa).

Residues 51-71 form a disordered region; it reads NFDLRDKNQRPGRNPKTGEDI.

It belongs to the bacterial histone-like protein family. As to quaternary structure, heterodimer of an alpha and a beta chain.

This protein is one of the two subunits of integration host factor, a specific DNA-binding protein that functions in genetic recombination as well as in transcriptional and translational control. The chain is Integration host factor subunit alpha (ihfA) from Dickeya dadantii (strain 3937) (Erwinia chrysanthemi (strain 3937)).